Consider the following 139-residue polypeptide: Large ribosomal subunit protein uL24 (139 aa).

The segment at 1 to 25 is disordered; that stretch reads MKRNTNVSSSRRKSRKAHFTASSGE.

It belongs to the universal ribosomal protein uL24 family.

The chain is Large ribosomal subunit protein uL24 (rpl26) from Dictyostelium discoideum (Social amoeba).